The chain runs to 335 residues: MVREKITVSTRTLQWKCVESAADSKRLLYGRFILSPLMKGQADTIGIAMRRALLGEIEGTCITRAKSEKISHEYATIMGIQESVHEILMNLKEIVLRSNLYGTCEASICVRGPGYVTAQDIILPPYVEIVDNTQHIASLTEPIELVIGLQIEKNRGYLIKAPNTFQDGSYPIDPVFMPVRNANHSIHSYENGNKEILFLEIWTNGSLTPKEALHEASRNLIDLLIPFLHTKEENLSLEDNQHIVPLPPFTFYDKLAKLTKNKKKMALKSIFIDQSELPPRIYNCLKRSNIYTLLDLLNNSQEDLMKMEHFRIEDVKQILGILEKNFVIDLPKNKF.

The segment at 1–231 is alpha N-terminal domain (alpha-NTD); the sequence is MVREKITVST…DLLIPFLHTK (231 aa). Residues 263 to 335 form an alpha C-terminal domain (alpha-CTD) region; sequence KKMALKSIFI…FVIDLPKNKF (73 aa).

This sequence belongs to the RNA polymerase alpha chain family. As to quaternary structure, in plastids the minimal PEP RNA polymerase catalytic core is composed of four subunits: alpha, beta, beta', and beta''. When a (nuclear-encoded) sigma factor is associated with the core the holoenzyme is formed, which can initiate transcription.

Its subcellular location is the plastid. The protein localises to the chloroplast. The catalysed reaction is RNA(n) + a ribonucleoside 5'-triphosphate = RNA(n+1) + diphosphate. Functionally, DNA-dependent RNA polymerase catalyzes the transcription of DNA into RNA using the four ribonucleoside triphosphates as substrates. This is DNA-directed RNA polymerase subunit alpha from Helianthus annuus (Common sunflower).